The sequence spans 314 residues: Testisin (314 aa).

Residues 1-19 form the signal peptide; that stretch reads MGARGALLLALLLARAGLR. Residues 20 to 41 constitute a propeptide that is removed on maturation; that stretch reads KPESQEAAPLSGPCGRRVITSR. 2 disulfide bridges follow: cysteine 33–cysteine 157 and cysteine 67–cysteine 83. A Peptidase S1 domain is found at 42–286; that stretch reads IVGGEDAELG…HFEWIQKLMA (245 aa). Catalysis depends on charge relay system residues histidine 82 and aspartate 137. Residues asparagine 167 and asparagine 200 are each glycosylated (N-linked (GlcNAc...) asparagine). Cystine bridges form between cysteine 171-cysteine 244, cysteine 204-cysteine 223, and cysteine 234-cysteine 262. Serine 238 functions as the Charge relay system in the catalytic mechanism. A glycan (N-linked (GlcNAc...) asparagine) is linked at asparagine 273. A lipid anchor (GPI-anchor amidated serine) is attached at serine 288. The propeptide at 289-314 is removed in mature form; the sequence is GMSQPDPSWPLLFFPLLWALPLLGPV.

This sequence belongs to the peptidase S1 family. As to expression, expressed predominantly in premeiotic testicular germ cells, mostly late pachytene and diplotene spermatocytes.

Its subcellular location is the cell membrane. Functionally, could regulate proteolytic events associated with testicular germ cell maturation. The sequence is that of Testisin (PRSS21) from Homo sapiens (Human).